The following is a 101-amino-acid chain: Urease subunit beta (101 aa).

It belongs to the urease beta subunit family. Heterotrimer of UreA (gamma), UreB (beta) and UreC (alpha) subunits. Three heterotrimers associate to form the active enzyme.

The protein resides in the cytoplasm. It catalyses the reaction urea + 2 H2O + H(+) = hydrogencarbonate + 2 NH4(+). The protein operates within nitrogen metabolism; urea degradation; CO(2) and NH(3) from urea (urease route): step 1/1. The polypeptide is Urease subunit beta (Burkholderia pseudomallei (strain 668)).